Here is a 142-residue protein sequence, read N- to C-terminus: Nucleoside diphosphate kinase (142 aa).

Positions 11, 59, 87, 93, 107, and 117 each coordinate ATP. The active-site Pros-phosphohistidine intermediate is the H120.

It belongs to the NDK family. In terms of assembly, homotetramer. The cofactor is Mg(2+).

The protein resides in the cytoplasm. It carries out the reaction a 2'-deoxyribonucleoside 5'-diphosphate + ATP = a 2'-deoxyribonucleoside 5'-triphosphate + ADP. The catalysed reaction is a ribonucleoside 5'-diphosphate + ATP = a ribonucleoside 5'-triphosphate + ADP. In terms of biological role, major role in the synthesis of nucleoside triphosphates other than ATP. The ATP gamma phosphate is transferred to the NDP beta phosphate via a ping-pong mechanism, using a phosphorylated active-site intermediate. This Aquifex aeolicus (strain VF5) protein is Nucleoside diphosphate kinase.